A 486-amino-acid chain; its full sequence is Cardiolipin synthase A (486 aa).

The next 2 membrane-spanning stretches (helical) occupy residues 3–23 (IFYN…IANI) and 38–58 (MSWL…WFFF). PLD phosphodiesterase domains are found at residues 219 to 246 (VDVR…VDPY) and 399 to 426 (QKGL…DMRS). Residues histidine 224, lysine 226, aspartate 231, histidine 404, lysine 406, and aspartate 411 contribute to the active site.

The protein belongs to the phospholipase D family. Cardiolipin synthase subfamily. ClsA sub-subfamily.

It localises to the cell inner membrane. The enzyme catalyses 2 a 1,2-diacyl-sn-glycero-3-phospho-(1'-sn-glycerol) = a cardiolipin + glycerol. Functionally, catalyzes the reversible phosphatidyl group transfer from one phosphatidylglycerol molecule to another to form cardiolipin (CL) (diphosphatidylglycerol) and glycerol. This is Cardiolipin synthase A from Buchnera aphidicola subsp. Acyrthosiphon pisum (strain APS) (Acyrthosiphon pisum symbiotic bacterium).